The chain runs to 306 residues: 3-methyl-2-oxobutanoate hydroxymethyltransferase (306 aa).

Residues aspartate 53 and aspartate 96 each contribute to the Mg(2+) site. 3-methyl-2-oxobutanoate is bound by residues 53-54, aspartate 96, and lysine 126; that span reads DS. Glutamate 128 serves as a coordination point for Mg(2+). Glutamate 195 acts as the Proton acceptor in catalysis.

The protein belongs to the PanB family. As to quaternary structure, homodecamer; pentamer of dimers. The cofactor is Mg(2+).

It is found in the cytoplasm. It carries out the reaction 3-methyl-2-oxobutanoate + (6R)-5,10-methylene-5,6,7,8-tetrahydrofolate + H2O = 2-dehydropantoate + (6S)-5,6,7,8-tetrahydrofolate. It functions in the pathway cofactor biosynthesis; (R)-pantothenate biosynthesis; (R)-pantoate from 3-methyl-2-oxobutanoate: step 1/2. Functionally, catalyzes the reversible reaction in which hydroxymethyl group from 5,10-methylenetetrahydrofolate is transferred onto alpha-ketoisovalerate to form ketopantoate. This Anaeromyxobacter dehalogenans (strain 2CP-1 / ATCC BAA-258) protein is 3-methyl-2-oxobutanoate hydroxymethyltransferase.